A 326-amino-acid chain; its full sequence is Centriolar satellite-associated tubulin polyglutamylase complex regulator 1 (326 aa).

A required for interaction with PCM1 region spans residues 1 to 111; it reads MLSPERLALP…HCLLQLLCPD (111 aa). The interval 1-225 is required for interaction with TPGS1, LRRC49, and TTLL1; that stretch reads MLSPERLALP…SCPPPALVKE (225 aa).

It belongs to the CSTPP1 family. As to quaternary structure, interacts with PCM1. Interacts with TTLL1, TPGS1, TPGS2 and LRRC49; the interactions link CSTPP1 to the complex TPGC. Binds to alpha-tubulin.

The protein resides in the cytoplasm. Its subcellular location is the cytoskeleton. It is found in the microtubule organizing center. It localises to the centrosome. The protein localises to the centriolar satellite. Regulator of the tubulin polyglutamylase complex (TPGC) that controls cytoskeletal organization, nuclear shape, and cilium disassembly by balancing microtubule and actin assembly. Regulates the assembly and stability of the TPGC and thereby modulates polyglutamylation of the microtubule, which antagonizes MAP4 binding. This chain is Centriolar satellite-associated tubulin polyglutamylase complex regulator 1 (CSTPP1), found in Bos taurus (Bovine).